The following is a 424-amino-acid chain: Histidine--tRNA ligase (424 aa).

It belongs to the class-II aminoacyl-tRNA synthetase family. In terms of assembly, homodimer.

The protein localises to the cytoplasm. It catalyses the reaction tRNA(His) + L-histidine + ATP = L-histidyl-tRNA(His) + AMP + diphosphate + H(+). The protein is Histidine--tRNA ligase of Thioalkalivibrio sulfidiphilus (strain HL-EbGR7).